A 962-amino-acid polypeptide reads, in one-letter code: Protein suppressor of underreplication (962 aa).

5 disordered regions span residues 353 to 413 (EIVT…TRAA), 438 to 590 (TPTP…LSGS), 658 to 712 (NSSH…SPDL), 866 to 900 (QERT…TQAT), and 916 to 962 (QTSS…ELFK). Positions 372–382 (PRTKSKKKCSK) are enriched in basic residues. Positions 386–395 (PCKEADLTDS) are enriched in basic and acidic residues. 2 stretches are compositionally biased toward polar residues: residues 438–448 (TPTPSGATTAI) and 480–489 (LTRSAESKIN). Positions 524-552 (VKQESKAKAKPEQKKKIKTVDKPAQETPK) are enriched in basic and acidic residues. The span at 553–562 (RKPGRPRKCK) shows a compositional bias: basic residues. The segment covering 564 to 576 (LTETLGKSKTKPN) has biased composition (polar residues). The span at 673-683 (RRTKALKRKRK) shows a compositional bias: basic residues. Polar residues-rich tracts occupy residues 703–712 (RSATNKSPDL) and 866–880 (QERT…NSIV). Over residues 885–894 (KSPKSPKHGA) the composition is skewed to basic residues. Residues 916-944 (QTSSVESVSAPSTPVNPSTSAAACQTRTA) are compositionally biased toward polar residues. Residues 953–962 (TKRKRLELFK) show a composition bias toward basic residues.

It localises to the nucleus. It is found in the chromosome. Its function is as follows. Required for underreplication of DNA, which is found in many late replicating euchromatic regions of salivary gland polytene chromosomes. Controls chromatin organization in polytene chromosomes. The sequence is that of Protein suppressor of underreplication (SuUR) from Drosophila erecta (Fruit fly).